The primary structure comprises 262 residues: 4-hydroxy-tetrahydrodipicolinate reductase (262 aa).

Position 9 to 14 (9 to 14) interacts with NAD(+); it reads GCLGRM. Arginine 36 serves as a coordination point for NADP(+). NAD(+) contacts are provided by residues 100–102 and 121–124; these read GTT and SANM. Histidine 154 serves as the catalytic Proton donor/acceptor. Histidine 155 contributes to the (S)-2,3,4,5-tetrahydrodipicolinate binding site. Catalysis depends on lysine 158, which acts as the Proton donor. 164–165 is a (S)-2,3,4,5-tetrahydrodipicolinate binding site; the sequence is GT.

It belongs to the DapB family.

It is found in the cytoplasm. The catalysed reaction is (S)-2,3,4,5-tetrahydrodipicolinate + NAD(+) + H2O = (2S,4S)-4-hydroxy-2,3,4,5-tetrahydrodipicolinate + NADH + H(+). The enzyme catalyses (S)-2,3,4,5-tetrahydrodipicolinate + NADP(+) + H2O = (2S,4S)-4-hydroxy-2,3,4,5-tetrahydrodipicolinate + NADPH + H(+). Its pathway is amino-acid biosynthesis; L-lysine biosynthesis via DAP pathway; (S)-tetrahydrodipicolinate from L-aspartate: step 4/4. Catalyzes the conversion of 4-hydroxy-tetrahydrodipicolinate (HTPA) to tetrahydrodipicolinate. This Wolbachia pipientis subsp. Culex pipiens (strain wPip) protein is 4-hydroxy-tetrahydrodipicolinate reductase.